The sequence spans 157 residues: 2-C-methyl-D-erythritol 2,4-cyclodiphosphate synthase (157 aa).

Asp8 and His10 together coordinate a divalent metal cation. 4-CDP-2-C-methyl-D-erythritol 2-phosphate contacts are provided by residues Asp8–His10 and His34–Ser35. His42 provides a ligand contact to a divalent metal cation. Residues Asp56–Gly58, Phe61–Asp65, Thr132–Glu135, Phe139, and Arg142 contribute to the 4-CDP-2-C-methyl-D-erythritol 2-phosphate site.

It belongs to the IspF family. As to quaternary structure, homotrimer. A divalent metal cation is required as a cofactor.

It catalyses the reaction 4-CDP-2-C-methyl-D-erythritol 2-phosphate = 2-C-methyl-D-erythritol 2,4-cyclic diphosphate + CMP. It participates in isoprenoid biosynthesis; isopentenyl diphosphate biosynthesis via DXP pathway; isopentenyl diphosphate from 1-deoxy-D-xylulose 5-phosphate: step 4/6. Its function is as follows. Involved in the biosynthesis of isopentenyl diphosphate (IPP) and dimethylallyl diphosphate (DMAPP), two major building blocks of isoprenoid compounds. Catalyzes the conversion of 4-diphosphocytidyl-2-C-methyl-D-erythritol 2-phosphate (CDP-ME2P) to 2-C-methyl-D-erythritol 2,4-cyclodiphosphate (ME-CPP) with a corresponding release of cytidine 5-monophosphate (CMP). The chain is 2-C-methyl-D-erythritol 2,4-cyclodiphosphate synthase from Salinibacter ruber (strain DSM 13855 / M31).